The primary structure comprises 238 residues: MSEDLAKQLASYKAQLQQVEAALSGNGENEDLLKLKKDLQEVIELTKDLLSTQPSETLTSSDSFASTQPTHSWKVGDKCMAVWSEDGQCYEAEIEEIDEENGTAAITFAVYGNAEVTPLLNLKPVEEGRKAKEDSGNKPMSKKEMIAQQREYKKKKALKKAQRIKELEQEREDQKVKWQQFNNRAYSKNKKGQVKRSIFASPESVTGKVGVGTCGIADKPMTQYQDTSKYNVRHLMPQ.

The 61-residue stretch at 72–132 (SWKVGDKCMA…KPVEEGRKAK (61 aa)) folds into the Tudor domain. The Nuclear localization signal motif lies at 142-160 (KKEMIAQQREYKKKKALKK). The residue at position 201 (serine 201) is a Phosphoserine. The residue at position 219 (lysine 219) is an N6-acetyllysine.

Belongs to the SMN family. Associates with spliceosomes. Associates with U4/U5/U6 tri-snRNP and with U2 snRNP.

It localises to the nucleus speckle. It is found in the nucleus. Its subcellular location is the cajal body. In terms of biological role, involved in spliceosome assembly. This chain is Survival of motor neuron-related-splicing factor 30 (Smndc1), found in Rattus norvegicus (Rat).